The sequence spans 138 residues: Acidic phospholipase A2 Ts-A6 (138 aa).

Positions 1–16 (MRALWIMAVLLLGVEG) are cleaved as a signal peptide. 7 disulfides stabilise this stretch: C42-C131, C44-C60, C59-C111, C65-C138, C66-C104, C73-C97, and C91-C102. Positions 43, 45, and 47 each coordinate Ca(2+). H63 is a catalytic residue. D64 serves as a coordination point for Ca(2+). Residue D105 is part of the active site.

Ca(2+) is required as a cofactor. As to expression, expressed by the venom gland.

It localises to the secreted. The enzyme catalyses a 1,2-diacyl-sn-glycero-3-phosphocholine + H2O = a 1-acyl-sn-glycero-3-phosphocholine + a fatty acid + H(+). Its function is as follows. Snake venom phospholipase A2 (PLA2) that shows a moderate inhibition of ADP-induced human platelet aggregation when tested on platelet rich plasma. Exhibits high hydrolytic activities and prefers the anionic micelles (dPPC with deoxycholate) to the zwitterionic micelles (dPPC with Triton X-100). PLA2 catalyzes the calcium-dependent hydrolysis of the 2-acyl groups in 3-sn-phosphoglycerides. The polypeptide is Acidic phospholipase A2 Ts-A6 (Trimeresurus stejnegeri (Chinese green tree viper)).